Consider the following 383-residue polypeptide: Na(+)/H(+) antiporter NhaA (383 aa).

A run of 11 helical transmembrane segments spans residues 21–41 (AAGV…NSIW), 56–76 (LTMR…LAGL), 94–114 (LLPG…YVAF), 123–143 (GWAI…ALAG), 152–172 (VFLT…IALF), 175–195 (GTLS…LLML), 202–222 (TLFP…KSGI), 258–278 (FVIL…GVTV), 287–307 (LGVG…AVSI), 326–346 (IGIA…AILA), and 355–375 (QIKL…YILL).

It belongs to the NhaA Na(+)/H(+) (TC 2.A.33) antiporter family.

The protein resides in the cell inner membrane. The enzyme catalyses Na(+)(in) + 2 H(+)(out) = Na(+)(out) + 2 H(+)(in). Its function is as follows. Na(+)/H(+) antiporter that extrudes sodium in exchange for external protons. This Granulibacter bethesdensis (strain ATCC BAA-1260 / CGDNIH1) protein is Na(+)/H(+) antiporter NhaA.